The primary structure comprises 316 residues: MQGENFTIWSIFFLEGFSQYPGLEVVLFVFSLVMYLTTLLGNSTLILITILDSRLKTPMYLFLGNLSFMDICYTSASVPTLLVNLLSSQKTIIFSGCAVQMYLSLAMGSTECVLLAVMAYDRYVAICNPLRYSIIMNRCVCARMATVSWVTGCLTALLETSFALQIPLCGNLIDHFTCEILAVLKLACTSSLLMNTIMLVVSILLLPIPMLLVCISYIFILSTILRITSAEGRNKAFSTCGAHLTVVILYYGAALSMYLKPSSSNAQKIDKIISLLYGVLTPMLNPIIYSLRNKEVKDAMKKLLGKITLHQTHEHL.

Over 1–20 (MQGENFTIWSIFFLEGFSQY) the chain is Extracellular. N-linked (GlcNAc...) asparagine glycosylation occurs at N5. A helical membrane pass occupies residues 21–41 (PGLEVVLFVFSLVMYLTTLLG). The Cytoplasmic portion of the chain corresponds to 42–65 (NSTLILITILDSRLKTPMYLFLGN). The helical transmembrane segment at 66–86 (LSFMDICYTSASVPTLLVNLL) threads the bilayer. Residues 87-97 (SSQKTIIFSGC) lie on the Extracellular side of the membrane. C97 and C188 form a disulfide bridge. A helical transmembrane segment spans residues 98 to 118 (AVQMYLSLAMGSTECVLLAVM). At 119-143 (AYDRYVAICNPLRYSIIMNRCVCAR) the chain is on the cytoplasmic side. Residues 144–164 (MATVSWVTGCLTALLETSFAL) form a helical membrane-spanning segment. Over 165-199 (QIPLCGNLIDHFTCEILAVLKLACTSSLLMNTIML) the chain is Extracellular. Residues 200 to 220 (VVSILLLPIPMLLVCISYIFI) traverse the membrane as a helical segment. Residues 221-238 (LSTILRITSAEGRNKAFS) lie on the Cytoplasmic side of the membrane. Residues 239–259 (TCGAHLTVVILYYGAALSMYL) form a helical membrane-spanning segment. Residues 260 to 270 (KPSSSNAQKID) are Extracellular-facing. Residues 271–291 (KIISLLYGVLTPMLNPIIYSL) traverse the membrane as a helical segment. Topologically, residues 292–316 (RNKEVKDAMKKLLGKITLHQTHEHL) are cytoplasmic.

This sequence belongs to the G-protein coupled receptor 1 family.

The protein localises to the cell membrane. Odorant receptor. The protein is Olfactory receptor 2K2 (OR2K2) of Homo sapiens (Human).